Here is a 506-residue protein sequence, read N- to C-terminus: Histidine ammonia-lyase (506 aa).

The 5-imidazolinone (Ala-Gly) cross-link spans 143–145; it reads ASG. At Ser-144 the chain carries 2,3-didehydroalanine (Ser).

It belongs to the PAL/histidase family. Contains an active site 4-methylidene-imidazol-5-one (MIO), which is formed autocatalytically by cyclization and dehydration of residues Ala-Ser-Gly.

The protein localises to the cytoplasm. The catalysed reaction is L-histidine = trans-urocanate + NH4(+). The protein operates within amino-acid degradation; L-histidine degradation into L-glutamate; N-formimidoyl-L-glutamate from L-histidine: step 1/3. This chain is Histidine ammonia-lyase, found in Salmonella paratyphi C (strain RKS4594).